The chain runs to 121 residues: Large ribosomal subunit protein bL12 (121 aa).

Belongs to the bacterial ribosomal protein bL12 family. In terms of assembly, homodimer. Part of the ribosomal stalk of the 50S ribosomal subunit. Forms a multimeric L10(L12)X complex, where L10 forms an elongated spine to which 2 to 4 L12 dimers bind in a sequential fashion. Binds GTP-bound translation factors.

Its function is as follows. Forms part of the ribosomal stalk which helps the ribosome interact with GTP-bound translation factors. Is thus essential for accurate translation. The polypeptide is Large ribosomal subunit protein bL12 (Anoxybacillus flavithermus (strain DSM 21510 / WK1)).